Here is a 202-residue protein sequence, read N- to C-terminus: ATP-dependent Clp protease proteolytic subunit (202 aa).

Catalysis depends on Ser106, which acts as the Nucleophile. His131 is a catalytic residue.

It belongs to the peptidase S14 family. Fourteen ClpP subunits assemble into 2 heptameric rings which stack back to back to give a disk-like structure with a central cavity, resembling the structure of eukaryotic proteasomes.

It localises to the cytoplasm. The enzyme catalyses Hydrolysis of proteins to small peptides in the presence of ATP and magnesium. alpha-casein is the usual test substrate. In the absence of ATP, only oligopeptides shorter than five residues are hydrolyzed (such as succinyl-Leu-Tyr-|-NHMec, and Leu-Tyr-Leu-|-Tyr-Trp, in which cleavage of the -Tyr-|-Leu- and -Tyr-|-Trp bonds also occurs).. Its function is as follows. Cleaves peptides in various proteins in a process that requires ATP hydrolysis. Has a chymotrypsin-like activity. Plays a major role in the degradation of misfolded proteins. This Shewanella oneidensis (strain ATCC 700550 / JCM 31522 / CIP 106686 / LMG 19005 / NCIMB 14063 / MR-1) protein is ATP-dependent Clp protease proteolytic subunit.